A 131-amino-acid chain; its full sequence is Large ribosomal subunit protein bL17 (131 aa).

This sequence belongs to the bacterial ribosomal protein bL17 family. As to quaternary structure, part of the 50S ribosomal subunit. Contacts protein L32.

In Shewanella amazonensis (strain ATCC BAA-1098 / SB2B), this protein is Large ribosomal subunit protein bL17.